The primary structure comprises 589 residues: Aspartate--tRNA ligase (589 aa).

Glutamate 174 contacts L-aspartate. Residues 198–201 (QLFK) form an aspartate region. Arginine 220 contributes to the L-aspartate binding site. ATP contacts are provided by residues 220–222 (RDE) and glutamine 229. Residue histidine 448 participates in L-aspartate binding. Residue glutamate 484 coordinates ATP. L-aspartate is bound at residue arginine 491. ATP is bound at residue 536–539 (GLDR).

This sequence belongs to the class-II aminoacyl-tRNA synthetase family. Type 1 subfamily. Homodimer.

The protein resides in the cytoplasm. The enzyme catalyses tRNA(Asp) + L-aspartate + ATP = L-aspartyl-tRNA(Asp) + AMP + diphosphate. In terms of biological role, catalyzes the attachment of L-aspartate to tRNA(Asp) in a two-step reaction: L-aspartate is first activated by ATP to form Asp-AMP and then transferred to the acceptor end of tRNA(Asp). In Leuconostoc citreum (strain KM20), this protein is Aspartate--tRNA ligase.